The sequence spans 528 residues: Ribonuclease Y (528 aa).

The helical transmembrane segment at 15–35 (SLLVFALICGSIIGYFLYSFF) threads the bilayer. Positions 217 to 277 (NISVVNIPNE…IRREIAKKTL (61 aa)) constitute a KH domain. One can recognise an HD domain in the interval 343–436 (VLKHSLEVAF…VAIADTLSSA (94 aa)).

It belongs to the RNase Y family.

It localises to the cell membrane. Functionally, endoribonuclease that initiates mRNA decay. This chain is Ribonuclease Y, found in Onion yellows phytoplasma (strain OY-M).